The sequence spans 670 residues: MGEPGKRVGIHRVRCFAKIKVFLLALIWAYISKILSGVYMSTMLTQLERQFNISTSIVGLINGSFEMGNLLVIVFVSYFGTKLHRPIMIGVGCAVMGLGCFIISLPHFLMGRYEYETTISPTSNLSSNSFLCVENRSQTLKPTQDPAECVKEIKSLMWIYVLVGNIIRGIGETPIMPLGISYIEDFAKSENSPLYIGILEVGKMIGPILGYLMGPFCANIYVDTGSVNTDDLTITPTDTRWVGAWWIGFLVCAGVNVLTSIPFFFFPKTLPKEGLQDNGDGTENAKEEKHRDKAKEENQGIIKEFFLMMKNLFCNPIYMLCVLTSVLQVNGVANIVIYKPKYLEHHFGISTAKAVFLIGLYTTPSVSAGYLISGFIMKKLKITLKKAAIIALCLFMSECLLSLCNFMLTCDTTPIAGLTTSYEGIQQSFDMENKFLSDCNTRCNCLTKTWDPVCGNNGLAYMSPCLAGCEKSVGTGANMVFQNCSCIRSSGNSSAVLGLCKKGPDCANKLQYFLIITVFCCFFYSLATIPGYMVFLRCMKSEEKSLGIGLQAFFMRLFAGIPAPIYFGALIDRTCLHWGTLKCGEPGACRTYEVSSFRRLYLGLPAALRGSIILPSFFILRLIRKLQIPGDTDSSEIELAETKPTEKESECTDMHKSSKVENDGELKTKL.

The Cytoplasmic segment spans residues 1–20 (MGEPGKRVGIHRVRCFAKIK). Residues 21-40 (VFLLALIWAYISKILSGVYM) traverse the membrane as a helical segment. The Extracellular portion of the chain corresponds to 41 to 59 (STMLTQLERQFNISTSIVG). An N-linked (GlcNAc...) asparagine glycan is attached at Asn52. A helical transmembrane segment spans residues 60–80 (LINGSFEMGNLLVIVFVSYFG). Residues 81 to 86 (TKLHRP) are Cytoplasmic-facing. The helical transmembrane segment at 87–111 (IMIGVGCAVMGLGCFIISLPHFLMG) threads the bilayer. Residues 112–155 (RYEYETTISPTSNLSSNSFLCVENRSQTLKPTQDPAECVKEIKS) lie on the Extracellular side of the membrane. Residues Asn124 and Asn135 are each glycosylated (N-linked (GlcNAc...) asparagine). The helical transmembrane segment at 156-184 (LMWIYVLVGNIIRGIGETPIMPLGISYIE) threads the bilayer. Over 185-203 (DFAKSENSPLYIGILEVGK) the chain is Cytoplasmic. A helical transmembrane segment spans residues 204-224 (MIGPILGYLMGPFCANIYVDT). Residues 225–242 (GSVNTDDLTITPTDTRWV) are Extracellular-facing. Residues 243-267 (GAWWIGFLVCAGVNVLTSIPFFFFP) traverse the membrane as a helical segment. Residues 268-311 (KTLPKEGLQDNGDGTENAKEEKHRDKAKEENQGIIKEFFLMMKN) are Cytoplasmic-facing. Residues 312 to 333 (LFCNPIYMLCVLTSVLQVNGVA) traverse the membrane as a helical segment. Over 334–353 (NIVIYKPKYLEHHFGISTAK) the chain is Extracellular. The chain crosses the membrane as a helical span at residues 354-377 (AVFLIGLYTTPSVSAGYLISGFIM). The Cytoplasmic portion of the chain corresponds to 378-381 (KKLK). The helical transmembrane segment at 382-405 (ITLKKAAIIALCLFMSECLLSLCN) threads the bilayer. Over 406–513 (FMLTCDTTPI…PDCANKLQYF (108 aa)) the chain is Extracellular. The 56-residue stretch at 433–488 (NKFLSDCNTRCNCLTKTWDPVCGNNGLAYMSPCLAGCEKSVGTGANMVFQNCSCIR) folds into the Kazal-like domain. 3 cysteine pairs are disulfide-bonded: Cys439-Cys469, Cys445-Cys465, and Cys454-Cys486. Residues Asn483 and Asn492 are each glycosylated (N-linked (GlcNAc...) asparagine). Residues 514–536 (LIITVFCCFFYSLATIPGYMVFL) traverse the membrane as a helical segment. Over 537–545 (RCMKSEEKS) the chain is Cytoplasmic. Residues 546-571 (LGIGLQAFFMRLFAGIPAPIYFGALI) form a helical membrane-spanning segment. Over 572–605 (DRTCLHWGTLKCGEPGACRTYEVSSFRRLYLGLP) the chain is Extracellular. A helical transmembrane segment spans residues 606 to 623 (AALRGSIILPSFFILRLI). Topologically, residues 624 to 670 (RKLQIPGDTDSSEIELAETKPTEKESECTDMHKSSKVENDGELKTKL) are cytoplasmic. Thr632 is modified (phosphothreonine). The disordered stretch occupies residues 633–670 (DSSEIELAETKPTEKESECTDMHKSSKVENDGELKTKL). 2 positions are modified to phosphoserine: Ser634 and Ser635. The span at 640-670 (AETKPTEKESECTDMHKSSKVENDGELKTKL) shows a compositional bias: basic and acidic residues.

This sequence belongs to the organo anion transporter (TC 2.A.60) family. As to expression, kidney specific.

The protein localises to the cell membrane. Its function is as follows. May mediate the Na(+)-independent transport of organic anions. The chain is Solute carrier organic anion transporter family member 1A6 (Slco1a6) from Mus musculus (Mouse).